The chain runs to 255 residues: Sugar fermentation stimulation protein homolog (255 aa).

It belongs to the SfsA family.

This is Sugar fermentation stimulation protein homolog from Synechococcus sp. (strain WH7803).